Consider the following 297-residue polypeptide: MSIDKKIRQIAFYGKGGIGKSTTSQNTLAAMAEMGQRILIVGCDPKADSTRLMLHSKAQTTVLHLAAERGAVEDLELEEVMLTGFRGVKCVESGGPEPGVGCAGRGIITAINFLEENGAYQDVDFVSYDVLGDVVCGGFAMPIRENKAQEIYIVTSGEMMAMYAANNIARGILKYAHTGGVRLGGLICNSRNVDREIELIETLAKRLNTQMIHYVPRDNIVQHAELRRMTVNEYAPDSNQGNEYRILANKIINNENLKIPTPIEMEELEELLIEFGILESEENAAKMIATTSESKSK.

14 to 21 (GKGGIGKS) is a binding site for ATP. Residue C102 coordinates [4Fe-4S] cluster. Position 105 is an ADP-ribosylarginine; by dinitrogenase reductase ADP-ribosyltransferase (R105). C136 contacts [4Fe-4S] cluster.

It belongs to the NifH/BchL/ChlL family. Homodimer. It depends on [4Fe-4S] cluster as a cofactor. Post-translationally, the reversible ADP-ribosylation of Arg-105 inactivates the nitrogenase reductase and regulates nitrogenase activity.

It catalyses the reaction N2 + 8 reduced [2Fe-2S]-[ferredoxin] + 16 ATP + 16 H2O = H2 + 8 oxidized [2Fe-2S]-[ferredoxin] + 2 NH4(+) + 16 ADP + 16 phosphate + 6 H(+). The key enzymatic reactions in nitrogen fixation are catalyzed by the nitrogenase complex, which has 2 components: the iron protein and the molybdenum-iron protein. This is Nitrogenase iron protein 2 (nifH2) from Nostoc sp. (strain PCC 7120 / SAG 25.82 / UTEX 2576).